The chain runs to 408 residues: Na(+)-translocating NADH-quinone reductase subunit F (408 aa).

A helical membrane pass occupies residues 4–24 (IYLGVGMFTIIVLVLVAIIMF). A 2Fe-2S ferredoxin-type domain is found at 33-127 (GDVEILINDD…DMEIELPEEV (95 aa)). The [2Fe-2S] cluster site is built by cysteine 70, cysteine 76, cysteine 79, and cysteine 111. The FAD-binding FR-type domain maps to 130 to 270 (IRKWDCTVKS…SGPFGEFFAK (141 aa)).

Belongs to the NqrF family. In terms of assembly, composed of six subunits; NqrA, NqrB, NqrC, NqrD, NqrE and NqrF. [2Fe-2S] cluster serves as cofactor. Requires FAD as cofactor.

It localises to the cell inner membrane. It catalyses the reaction a ubiquinone + n Na(+)(in) + NADH + H(+) = a ubiquinol + n Na(+)(out) + NAD(+). Functionally, NQR complex catalyzes the reduction of ubiquinone-1 to ubiquinol by two successive reactions, coupled with the transport of Na(+) ions from the cytoplasm to the periplasm. The first step is catalyzed by NqrF, which accepts electrons from NADH and reduces ubiquinone-1 to ubisemiquinone by a one-electron transfer pathway. The sequence is that of Na(+)-translocating NADH-quinone reductase subunit F from Idiomarina loihiensis (strain ATCC BAA-735 / DSM 15497 / L2-TR).